The chain runs to 512 residues: 2,3-bisphosphoglycerate-independent phosphoglycerate mutase (512 aa).

Mn(2+) contacts are provided by D13 and S63. S63 functions as the Phosphoserine intermediate in the catalytic mechanism. Residues H124, R154–D155, R186, R192, R262–R265, and K337 contribute to the substrate site. Mn(2+) contacts are provided by D404, H408, D445, H446, and H463.

It belongs to the BPG-independent phosphoglycerate mutase family. Monomer. Mn(2+) serves as cofactor.

The catalysed reaction is (2R)-2-phosphoglycerate = (2R)-3-phosphoglycerate. Its pathway is carbohydrate degradation; glycolysis; pyruvate from D-glyceraldehyde 3-phosphate: step 3/5. Essential for rapid growth and for sporulation. Catalyzes the interconversion of 2-phosphoglycerate and 3-phosphoglycerate. The sequence is that of 2,3-bisphosphoglycerate-independent phosphoglycerate mutase from Oceanobacillus iheyensis (strain DSM 14371 / CIP 107618 / JCM 11309 / KCTC 3954 / HTE831).